A 335-amino-acid chain; its full sequence is MVNEKVNPFDLASVSPLVLGGAILNQQYTDEPESIPLEDIIKYAFSHGINAIDTSPYYGPSEVLYGRALSNLRNEFPRDTYFICTKVGRIGAEEFNYSRDFVRFSVHRSCERLHTTYLDLVYLHDVEFVKFPDILEALKELRTLKNKGVIKNFGISGYPIDFITWLAEYCSTEESDIGSLDAVLSYCNLNLQNNKLLNFRERLLRNAKLKMVCNASILSMSLLRSQETRQFHPCSHELRECASQAAKYCQEQNVDLADLATRYAISEWVGKGPVVLGVSSMEELKLALDNYEIVKSNGNRLSSKDGQLVEYIQKNIFKEHFNEEWSSGIPHPEMI.

Tyrosine 58 acts as the Proton donor in catalysis. Histidine 124 provides a ligand contact to substrate. NAD(+) is bound at residue 221–287 (SLLRSQETRQ…VSSMEELKLA (67 aa)).

This sequence belongs to the aldo/keto reductase family. Aldo/keto reductase 2 subfamily.

The enzyme catalyses D-arabinose + NAD(+) = D-arabinono-1,4-lactone + NADH + H(+). The protein is D-arabinose 1-dehydrogenase (ARA2) of Saccharomyces cerevisiae (strain ATCC 204508 / S288c) (Baker's yeast).